Here is a 405-residue protein sequence, read N- to C-terminus: Tryptophan synthase beta chain (405 aa).

Lysine 95 is subject to N6-(pyridoxal phosphate)lysine.

The protein belongs to the TrpB family. As to quaternary structure, tetramer of two alpha and two beta chains. It depends on pyridoxal 5'-phosphate as a cofactor.

It carries out the reaction (1S,2R)-1-C-(indol-3-yl)glycerol 3-phosphate + L-serine = D-glyceraldehyde 3-phosphate + L-tryptophan + H2O. Its pathway is amino-acid biosynthesis; L-tryptophan biosynthesis; L-tryptophan from chorismate: step 5/5. The beta subunit is responsible for the synthesis of L-tryptophan from indole and L-serine. The sequence is that of Tryptophan synthase beta chain from Pseudomonas putida (strain ATCC 47054 / DSM 6125 / CFBP 8728 / NCIMB 11950 / KT2440).